Consider the following 495-residue polypeptide: MGSKRRNLSCSERHQKLVDENYCKKLHVQALKNVNSQIRNQMVQNENDNRVQRKQFLRLLQNEQFELDMEEAIQKAEENKRLKELQLKQEEKLAMELAKLKHESLKDEKMRQQVRENSIELRELEKKLKAAYMNKERAAQIAEKDAIKYEQMKRDAEIAKTMMEEHKRIIKEENAAEDKRNKAKAQYYLDLEKQLEEQEKKKQEAYEQLLKEKLMIDEIVRKIYEEDQLEKQQKLEKMNAMRRYIEEFQKEQALWRKKKREEMEEENRKIIEFANMQQQREEDRMAKVQENEEKRLQLQNALTQKLEEMLRQREDLEQVRQELYQEEQAEIYKSKLKEEAEKKLRKQKEMKQDFEEQMALKELVLQAAKEEEENFRKTMLAKFAEDDRIELMNAQKQRMKQLEHRRAVEKLIEERRQQFLADKQRELEEWQLQQRRQGFINAIIEEERLKLLKEHATNLLGYLPKGVFKKEDDIDLLGEEFRKVYQQRSEICEEK.

The segment at 1–314 is interaction with BBOF1; sequence MGSKRRNLSC…KLEEMLRQRE (314 aa). Residues 28–410 are a coiled coil; that stretch reads VQALKNVNSQ…QLEHRRAVEK (383 aa). Residue Tyr188 is modified to Phosphotyrosine.

Belongs to the MNS1 family. In terms of assembly, able to form oligomers. Microtubule inner protein component of sperm flagellar doublet microtubules. Interacts with ODAD1. Interacts with BBOF1. As to expression, expressed in nasal respiratory epithelium and in the sperm.

Its subcellular location is the nucleus. The protein resides in the cytoplasm. It localises to the cytoskeleton. The protein localises to the cilium axoneme. It is found in the flagellum axoneme. Microtubule inner protein (MIP) part of the dynein-decorated doublet microtubules (DMTs) in cilia axoneme, which is required for motile cilia beating. May play a role in the control of meiotic division and germ cell differentiation through regulation of pairing and recombination during meiosis. Required for sperm flagella assembly. May play a role in the assembly and function of the outer dynein arm-docking complex (ODA-DC). ODA-DC mediates outer dynein arms (ODA) binding onto the axonemal doublet microtubules. The chain is Meiosis-specific nuclear structural protein 1 from Homo sapiens (Human).